A 516-amino-acid chain; its full sequence is Ammonium transporter Amt1 (516 aa).

Helical transmembrane passes span 17–37 (YVWI…FALL), 59–79 (ALGV…VGGL), 101–121 (IDWL…SGAV), 130–150 (YVVF…GLTW), 170–190 (LDFA…LVGA), 214–234 (MLLA…FNVG), 258–278 (VALV…VVST), 286–306 (PLWM…AVPH), 307–327 (VTWW…LPAY), 342–362 (VFAV…VFAV), and 374–394 (VAGV…VFAA). Positions 426–516 (IGESGPDRGV…SAAVDGGENQ (91 aa)) are disordered. The span at 445–491 (NDVRTDGGNDVRTDGGNDVRTDGGNDVRTDGGNDVRTDGGNDVRTDG) shows a compositional bias: basic and acidic residues.

Belongs to the ammonia transporter channel (TC 1.A.11.2) family. In terms of assembly, homotrimer. Interacts with both GlnK1 and GlnK2 after ammonium shock. Interaction is rapid, reversible and dependent on nitrogen source.

It is found in the cell membrane. Involved in the uptake of ammonium/ammonia (NH(4)(+)/NH(3)). Transport is electrogenic. The protein is Ammonium transporter Amt1 of Haloferax mediterranei (strain ATCC 33500 / DSM 1411 / JCM 8866 / NBRC 14739 / NCIMB 2177 / R-4) (Halobacterium mediterranei).